The primary structure comprises 301 residues: Phosphate transport system permease protein PstA 2 (301 aa).

Helical transmembrane passes span 36–56, 83–103, 127–147, 149–169, 209–229, and 274–294; these read ACVCCLAVVITPTLWMLIGVV, IIGTAVLAIGVILVGGTVSVL, LSGIPSIVLGYVGYLALVVYF, WGFSLAAGVLVLSVMSIPYIA, GIVTGMLVALALAIGETAPLL, and ALLLIVFLLLLIFIGRLINWL. Residues 83–288 enclose the ABC transmembrane type-1 domain; it reads IIGTAVLAIG…VFLLLLIFIG (206 aa).

This sequence belongs to the binding-protein-dependent transport system permease family. CysTW subfamily.

It is found in the cell membrane. Functionally, part of the binding-protein-dependent transport system for phosphate; probably responsible for the translocation of the substrate across the membrane. The sequence is that of Phosphate transport system permease protein PstA 2 (pstA2) from Mycobacterium bovis (strain ATCC BAA-935 / AF2122/97).